Consider the following 174-residue polypeptide: NADH-ubiquinone oxidoreductase chain 6 (174 aa).

4 helical membrane passes run 24–44 (LALGLTLLIQTIFVCLLTGLM), 53–73 (ILFLIFLGGMLVLFIYVTSLA), 82–102 (MKLTLFSSLILIFMLILSFIM), and 143–163 (FITILLMNYLLITLIVIVKIT).

This sequence belongs to the complex I subunit 6 family.

The protein resides in the mitochondrion membrane. The catalysed reaction is a ubiquinone + NADH + 5 H(+)(in) = a ubiquinol + NAD(+) + 4 H(+)(out). Functionally, core subunit of the mitochondrial membrane respiratory chain NADH dehydrogenase (Complex I) that is believed to belong to the minimal assembly required for catalysis. Complex I functions in the transfer of electrons from NADH to the respiratory chain. The immediate electron acceptor for the enzyme is believed to be ubiquinone. This Drosophila melanogaster (Fruit fly) protein is NADH-ubiquinone oxidoreductase chain 6 (mt:ND6).